Consider the following 638-residue polypeptide: E3 ubiquitin-protein ligase TRIM47 (638 aa).

At Met1 the chain carries N-acetylmethionine. The RING-type zinc-finger motif lies at 9 to 58 (CPICLEPLREPVTLPCGHNFCLACLGALWPHRGASGAGGPGGAARCPLCQ). A Phosphothreonine modification is found at Thr72. Positions 79 to 119 (LRQGSGPGSGPGPAPALAPEPSAPSALPSVPEPSAPCAPEP) are disordered. Pro residues-rich tracts occupy residues 88–100 (GPGP…PEPS) and 108–119 (VPEPSAPCAPEP). The segment at 177–217 (LEESLCPRHLRPLERYCRAERVCLCEACAAQEHRGHELVPL) adopts a B box-type zinc-finger fold. 4 residues coordinate Zn(2+): Cys182, His185, Cys204, and His209. The stretch at 296-324 (MLGRSQGDLRRQEEQRSRLSRARQNLSQV) forms a coiled coil. Disordered regions lie at residues 300-322 (SQGD…QNLS) and 384-411 (LRGP…LEST). The span at 302-312 (GDLRRQEEQRS) shows a compositional bias: basic and acidic residues. The B30.2/SPRY domain maps to 410–631 (STNLLESEAP…LQIGPLKKSC (222 aa)). Position 461 is a phosphoserine (Ser461). Arg582 is modified (omega-N-methylarginine). Residue Ser588 is modified to Phosphoserine.

This sequence belongs to the TRIM/RBCC family. Low expression in most tissues. Higher expression in kidney tubular cells. Overexpressed in astrocytoma tumor cells.

It is found in the cytoplasm. The protein localises to the nucleus. It carries out the reaction S-ubiquitinyl-[E2 ubiquitin-conjugating enzyme]-L-cysteine + [acceptor protein]-L-lysine = [E2 ubiquitin-conjugating enzyme]-L-cysteine + N(6)-ubiquitinyl-[acceptor protein]-L-lysine.. It participates in protein modification; protein ubiquitination. Functionally, E3 ubiquitin-protein ligase that mediates the ubiquitination and proteasomal degradation of CYLD. The chain is E3 ubiquitin-protein ligase TRIM47 from Homo sapiens (Human).